We begin with the raw amino-acid sequence, 69 residues long: U-Asilidin(12)-Dg3a (69 aa).

The signal sequence occupies residues 1-19 (MRFLNIFLFFAAIIAFATA). Residues 20 to 33 (SQVFEEDEIDMEPR) constitute a propeptide that is removed on maturation. 3 cysteine pairs are disulfide-bonded: Cys36–Cys59, Cys45–Cys65, and Cys49–Cys67.

The protein belongs to the asilidin-12 family. Expressed by the venom gland.

The protein resides in the secreted. Its function is as follows. Moderately increases Kv11.1/KCNH2/ERG1 currents and shifts the voltage-dependence of the channel activation to hyperpolarised potentials. In vivo, induces neurotoxic effects when injected into insects (tested on L.cuprina and A.domesticus). The chain is U-Asilidin(12)-Dg3a from Dolopus genitalis (Giant Australian assassin fly).